We begin with the raw amino-acid sequence, 173 residues long: ATP synthase subunit b (173 aa).

Residues 25–45 traverse the membrane as a helical segment; the sequence is LINLVIVIGVLYWFLKGFLGG.

This sequence belongs to the ATPase B chain family. In terms of assembly, F-type ATPases have 2 components, F(1) - the catalytic core - and F(0) - the membrane proton channel. F(1) has five subunits: alpha(3), beta(3), gamma(1), delta(1), epsilon(1). F(0) has four main subunits: a(1), b(1), b'(1) and c(10-14). The alpha and beta chains form an alternating ring which encloses part of the gamma chain. F(1) is attached to F(0) by a central stalk formed by the gamma and epsilon chains, while a peripheral stalk is formed by the delta, b and b' chains.

The protein resides in the cellular thylakoid membrane. Its function is as follows. F(1)F(0) ATP synthase produces ATP from ADP in the presence of a proton or sodium gradient. F-type ATPases consist of two structural domains, F(1) containing the extramembraneous catalytic core and F(0) containing the membrane proton channel, linked together by a central stalk and a peripheral stalk. During catalysis, ATP synthesis in the catalytic domain of F(1) is coupled via a rotary mechanism of the central stalk subunits to proton translocation. Functionally, component of the F(0) channel, it forms part of the peripheral stalk, linking F(1) to F(0). The sequence is that of ATP synthase subunit b from Synechococcus sp. (strain CC9311).